A 100-amino-acid polypeptide reads, in one-letter code: Aspartyl/glutamyl-tRNA(Asn/Gln) amidotransferase subunit C (100 aa).

It belongs to the GatC family. As to quaternary structure, heterotrimer of A, B and C subunits.

The catalysed reaction is L-glutamyl-tRNA(Gln) + L-glutamine + ATP + H2O = L-glutaminyl-tRNA(Gln) + L-glutamate + ADP + phosphate + H(+). It carries out the reaction L-aspartyl-tRNA(Asn) + L-glutamine + ATP + H2O = L-asparaginyl-tRNA(Asn) + L-glutamate + ADP + phosphate + 2 H(+). Its function is as follows. Allows the formation of correctly charged Asn-tRNA(Asn) or Gln-tRNA(Gln) through the transamidation of misacylated Asp-tRNA(Asn) or Glu-tRNA(Gln) in organisms which lack either or both of asparaginyl-tRNA or glutaminyl-tRNA synthetases. The reaction takes place in the presence of glutamine and ATP through an activated phospho-Asp-tRNA(Asn) or phospho-Glu-tRNA(Gln). This Dictyoglomus thermophilum (strain ATCC 35947 / DSM 3960 / H-6-12) protein is Aspartyl/glutamyl-tRNA(Asn/Gln) amidotransferase subunit C.